The sequence spans 217 residues: Membrane-associated progesterone receptor component 2 (217 aa).

O-linked (Xyl...) (chondroitin sulfate) serine glycosylation occurs at Ser-15. The helical transmembrane segment at 40–62 threads the bilayer; sequence ALLATGGEMLLNVALVALVLLGA. Phosphoserine is present on residues Ser-84, Ser-98, and Ser-202. The Cytochrome b5 heme-binding domain occupies 96–195; that stretch reads DFSLEQLRQY…EKYDYVGRLL (100 aa). The tract at residues 196–217 is disordered; the sequence is KPGEEPSEYTDEEDTKDHSKQD. The segment covering 200–209 has biased composition (acidic residues); the sequence is EPSEYTDEED. Position 204 is a phosphotyrosine (Tyr-204). Thr-205 bears the Phosphothreonine mark.

Belongs to the cytochrome b5 family. MAPR subfamily. Interacts with PGRMC1. Interacts with AAAS. As to expression, expressed in brown adipose tissue, white adipose tissue, liver, heart, skeletal muscle, brain and adrenal gland.

The protein resides in the membrane. Its subcellular location is the nucleus envelope. It localises to the endoplasmic reticulum. It is found in the secreted. Its function is as follows. Required for the maintenance of uterine histoarchitecture and normal female reproductive lifespan. May serve as a universal non-classical progesterone receptor in the uterus. Intracellular heme chaperone required for delivery of labile, or signaling heme, to the nucleus. Plays a role in adipocyte function and systemic glucose homeostasis. In brown fat, which has a high demand for heme, delivery of labile heme in the nucleus regulates the activity of heme-responsive transcriptional repressors such as NR1D1 and BACH1. The chain is Membrane-associated progesterone receptor component 2 from Mus musculus (Mouse).